Here is a 97-residue protein sequence, read N- to C-terminus: Exodeoxyribonuclease 7 small subunit (97 aa).

Positions 1–22 (MAKTASPGATPPGNGTEPLPDN) are disordered.

Belongs to the XseB family. As to quaternary structure, heterooligomer composed of large and small subunits.

Its subcellular location is the cytoplasm. The enzyme catalyses Exonucleolytic cleavage in either 5'- to 3'- or 3'- to 5'-direction to yield nucleoside 5'-phosphates.. Functionally, bidirectionally degrades single-stranded DNA into large acid-insoluble oligonucleotides, which are then degraded further into small acid-soluble oligonucleotides. In Burkholderia lata (strain ATCC 17760 / DSM 23089 / LMG 22485 / NCIMB 9086 / R18194 / 383), this protein is Exodeoxyribonuclease 7 small subunit.